Reading from the N-terminus, the 86-residue chain is Elicitor peptide 5 (86 aa).

Positions 1 to 59 (MQQERDHKRDCCKLMPQTVKAFFKCLRFRRSSSSSSDMVKARARNEEKEEPSSIETSTR) are excised as a propeptide. Residues 31–86 (SSSSSSDMVKARARNEEKEEPSSIETSTRSLNVMRKGIRKQPVSSGKRGGVNDYDM) are disordered. Positions 39–51 (VKARARNEEKEEP) are enriched in basic and acidic residues.

Belongs to the brassicaceae elicitor peptide family.

Functionally, elicitor of plant defense. The polypeptide is Elicitor peptide 5 (PEP5) (Arabidopsis thaliana (Mouse-ear cress)).